Here is a 441-residue protein sequence, read N- to C-terminus: Zinc finger protein ZIC 3 (441 aa).

A C2H2-type 1; atypical zinc finger spans residues 222 to 257 (LSCKWLEESTMNHPQKTCDRTFSSMHELVTHMTMEH). The C2H2-type 2; atypical zinc finger occupies 266-293 (HICYWEECPRGGKSFKAKYKLVNHIRVH). C2H2-type zinc fingers lie at residues 299–323 (FPCP…KRTH), 329–353 (FKCE…MHVH), and 359–381 (YICK…MKVH). A disordered region spans residues 375–441 (RKHMKVHESQ…LPPNFNEWYV (67 aa)). Residues 383–399 (SQGSDSSPAASSGYESA) are compositionally biased toward low complexity. Positions 406 to 429 (SANSEEPSKNSSATHQTNNNSHNT) are enriched in polar residues.

Belongs to the GLI C2H2-type zinc-finger protein family. As to expression, first detected at early gastrula (stage 10.25) in the dorsal lip and prospective neural plate. Also expressed in the mesoderm at early gastrulation, with expression strongest on the dorsal side. Mesodermal expression continues at stage 12 but is hardly detectable after stage 14. As gastrulation proceeds, expression decreases in the dorsal lip and increases in the prospective neural plate. At the neural plate stage (stage 14), expressed strongly in the prospective mesencephalon and anterior rhombencephalon, after which expression becomes stronger in the anterior neural folds. At early tailbud stage (stage 20), expression becomes restricted to the dorsal region of forebrain, midbrain and hindbrain, and weakly to the dorsal trunk. After mid-tailbud stage, expression decreases in the diencephalon, appears in the lateral mesoderm of the tailbud region and becomes restricted in the dorsal part of the neural tube.

It localises to the nucleus. The protein localises to the cytoplasm. Its function is as follows. Probably acts as a transcriptional activator. May bind to the minimal GLI-consensus sequence 5'-GGGTGGTC-3'. Can determine the ectodermal cell fate and promote the earliest step of neural and neural crest development. Involved in establishing left-right asymmetry in the embryo. The protein is Zinc finger protein ZIC 3 (zic3) of Xenopus laevis (African clawed frog).